The chain runs to 155 residues: Histone H2B.4 (155 aa).

The segment covering 1-28 (MAPKTKEEKPASEAVEPKAEAKPKAEKA) has biased composition (basic and acidic residues). Positions 1 to 62 (MAPKTKEEKP…GDKKKKKAKV (62 aa)) are disordered. Positions 29–40 (PKKKEKKAPAKK) are enriched in basic residues. Residue lysine 151 forms a Glycyl lysine isopeptide (Lys-Gly) (interchain with G-Cter in ubiquitin) linkage.

The protein belongs to the histone H2B family. In terms of assembly, the nucleosome is a histone octamer containing two molecules each of H2A, H2B, H3 and H4 assembled in one H3-H4 heterotetramer and two H2A-H2B heterodimers. The octamer wraps approximately 147 bp of DNA. Monoubiquitinated to form H2BK143ub1; may give a specific tag for epigenetic transcriptional activation.

It is found in the nucleus. It localises to the chromosome. Core component of nucleosome. Nucleosomes wrap and compact DNA into chromatin, limiting DNA accessibility to the cellular machineries which require DNA as a template. Histones thereby play a central role in transcription regulation, DNA repair, DNA replication and chromosomal stability. DNA accessibility is regulated via a complex set of post-translational modifications of histones, also called histone code, and nucleosome remodeling. The polypeptide is Histone H2B.4 (Volvox carteri (Green alga)).